We begin with the raw amino-acid sequence, 24 residues long: M-poneritoxin-Ng1e (24 aa).

As to expression, expressed by the venom gland.

It is found in the secreted. Its subcellular location is the target cell membrane. Its function is as follows. Has a broad spectrum of activity against both Gram-positive and Gram-negative bacteria and S.cerevisiae. Has insecticidal and hemolytic activities. May act by disrupting the integrity of the bacterial cell membrane. The chain is M-poneritoxin-Ng1e from Neoponera goeldii (Ponerine ant).